The chain runs to 355 residues: Probable cinnamyl alcohol dehydrogenase (355 aa).

Cys47 contributes to the Zn(2+) binding site. Ser49 provides a ligand contact to NADP(+). Residues His69, Glu70, Cys100, Cys103, Cys106, Cys114, and Cys162 each contribute to the Zn(2+) site. Residues Thr166, 187–192 (GLGGVG), 210–215 (SSSDKK), Thr250, Gly274, and 297–299 (SFI) contribute to the NADP(+) site.

This sequence belongs to the zinc-containing alcohol dehydrogenase family. As to quaternary structure, homodimer. Zn(2+) serves as cofactor.

It catalyses the reaction (E)-cinnamyl alcohol + NADP(+) = (E)-cinnamaldehyde + NADPH + H(+). The catalysed reaction is (E)-coniferol + NADP(+) = (E)-coniferaldehyde + NADPH + H(+). The enzyme catalyses (E)-sinapyl alcohol + NADP(+) = (E)-sinapaldehyde + NADPH + H(+). It carries out the reaction (E)-4-coumaroyl alcohol + NADP(+) = (E)-4-coumaraldehyde + NADPH + H(+). It catalyses the reaction (E)-caffeyl alcohol + NADP(+) = (E)-caffeyl aldehyde + NADPH + H(+). It participates in aromatic compound metabolism; phenylpropanoid biosynthesis. Functionally, involved in lignin biosynthesis. Catalyzes the final step specific for the production of lignin monomers. Catalyzes the NADPH-dependent reduction of coniferaldehyde, 5-hydroxyconiferaldehyde, sinapaldehyde, 4-coumaraldehyde and caffeyl aldehyde to their respective alcohols. The protein is Probable cinnamyl alcohol dehydrogenase (CAD1) of Eucalyptus botryoides (Southern mahogany).